The sequence spans 338 residues: Glyceraldehyde-3-phosphate dehydrogenase (338 aa).

NAD(+) contacts are provided by residues R12 to I13, D34, and R79. D-glyceraldehyde 3-phosphate is bound by residues S150–T152, T181, T210–G211, and R233. Residue C151 is the Nucleophile of the active site. Position 315 (N315) interacts with NAD(+).

The protein belongs to the glyceraldehyde-3-phosphate dehydrogenase family. Homotetramer.

Its subcellular location is the cytoplasm. The catalysed reaction is D-glyceraldehyde 3-phosphate + phosphate + NAD(+) = (2R)-3-phospho-glyceroyl phosphate + NADH + H(+). The protein operates within carbohydrate degradation; glycolysis; pyruvate from D-glyceraldehyde 3-phosphate: step 1/5. The polypeptide is Glyceraldehyde-3-phosphate dehydrogenase (gpd-1) (Neurospora crassa (strain ATCC 24698 / 74-OR23-1A / CBS 708.71 / DSM 1257 / FGSC 987)).